The primary structure comprises 122 residues: MPPKPSAKGAKKAAKTVTKPKDGKKRRHARKESYSVYIYRVLKQVHPDTGVSSKAMSIMNSFVNDVFERIAAEASRLAHYNKRSTISSREIQTAVRLILPGELAKHAVSEGTKAVTKYTSSK.

The disordered stretch occupies residues 1–30 (MPPKPSAKGAKKAAKTVTKPKDGKKRRHAR). Residue S109 is glycosylated (O-linked (GlcNAc) serine). Residue K117 forms a Glycyl lysine isopeptide (Lys-Gly) (interchain with G-Cter in ubiquitin) linkage.

The protein belongs to the histone H2B family. In terms of assembly, the nucleosome is a histone octamer containing two molecules each of H2A, H2B, H3 and H4 assembled in one H3-H4 heterotetramer and two H2A-H2B heterodimers. The octamer wraps approximately 147 bp of DNA. In terms of processing, monoubiquitination of Lys-117 gives a specific tag for epigenetic transcriptional activation and is also prerequisite for histone H3 'Lys-4' and 'Lys-79' methylation. Post-translationally, glcNAcylation at Ser-109 promotes monoubiquitination of Lys-117. It fluctuates in response to extracellular glucose, and associates with transcribed genes.

The protein localises to the nucleus. It localises to the chromosome. Its function is as follows. Core component of nucleosome. Nucleosomes wrap and compact DNA into chromatin, limiting DNA accessibility to the cellular machineries which require DNA as a template. Histones thereby play a central role in transcription regulation, DNA repair, DNA replication and chromosomal stability. DNA accessibility is regulated via a complex set of post-translational modifications of histones, also called histone code, and nucleosome remodeling. This Caenorhabditis elegans protein is Histone H2B 1 (his-11).